The chain runs to 287 residues: uncharacterized protein (287 aa).

The N-terminal stretch at 1–31 is a signal peptide; it reads MLGSMALKLRKWIWASIPSLALILSSCSALV.

The protein belongs to the MG439/MG440 family.

This is an uncharacterized protein from Mycoplasma pneumoniae (strain ATCC 29342 / M129 / Subtype 1) (Mycoplasmoides pneumoniae).